A 477-amino-acid polypeptide reads, in one-letter code: MTKKLYIKTWGCQMNEYDSEKMADLLDSTHGFSAAQSAEEADVILLNTCSIREKAQEKVFHQLGRWKTLKQDKPELIIGVGGCVASQEGDTIRQRAPFVDLVFGPQTLHRLPEMINELKGGAKSVIDVSFPEIEKFDRLPEPRAEGPTAFVSIMEGCSKYCTFCVVPYTRGEEVSRPVDDVLLEIAQLAGQGVREVNLLGQNVNAYRGENYDGTICRFSELLELVAAIDGIDRIRYTTSHPVEFTDDIIDAYASIPELVDHLHLPVQSGSDRILNLMKRGHTALEYKSKMRKLKKIRPNISLSSDFIIGFPGETDADFEATMDLIQAVDYDLSFSFIYSARPGTPAADAVDDVTEETKKQRLHLLQQRITQQALRIARHMVGTEQRILVEGPSKKNPMELSGRTENNRVVNFEGTPDMIGEFVDVNITDVFTNSLRGEVVRRESEMGLRVAVSPQSIMAKHQADMPDELGVGQFSPA.

One can recognise an MTTase N-terminal domain in the interval 3–120 (KKLYIKTWGC…LPEMINELKG (118 aa)). The [4Fe-4S] cluster site is built by Cys12, Cys49, Cys83, Cys157, Cys161, and Cys164. The Radical SAM core domain maps to 143–375 (RAEGPTAFVS…QQRITQQALR (233 aa)). The region spanning 378–441 (RHMVGTEQRI…TNSLRGEVVR (64 aa)) is the TRAM domain.

Belongs to the methylthiotransferase family. MiaB subfamily. In terms of assembly, monomer. [4Fe-4S] cluster serves as cofactor.

It is found in the cytoplasm. It catalyses the reaction N(6)-dimethylallyladenosine(37) in tRNA + (sulfur carrier)-SH + AH2 + 2 S-adenosyl-L-methionine = 2-methylsulfanyl-N(6)-dimethylallyladenosine(37) in tRNA + (sulfur carrier)-H + 5'-deoxyadenosine + L-methionine + A + S-adenosyl-L-homocysteine + 2 H(+). Its function is as follows. Catalyzes the methylthiolation of N6-(dimethylallyl)adenosine (i(6)A), leading to the formation of 2-methylthio-N6-(dimethylallyl)adenosine (ms(2)i(6)A) at position 37 in tRNAs that read codons beginning with uridine. The chain is tRNA-2-methylthio-N(6)-dimethylallyladenosine synthase from Alteromonas mediterranea (strain DSM 17117 / CIP 110805 / LMG 28347 / Deep ecotype).